A 499-amino-acid polypeptide reads, in one-letter code: Glutamate--tRNA ligase (499 aa).

A 'HIGH' region motif is present at residues 12–22 (PSPTGHLHIGN). The 'KMSKS' region signature appears at 259 to 263 (KLSKR). K262 contributes to the ATP binding site.

This sequence belongs to the class-I aminoacyl-tRNA synthetase family. Glutamate--tRNA ligase type 1 subfamily. In terms of assembly, monomer.

The protein resides in the cytoplasm. The catalysed reaction is tRNA(Glu) + L-glutamate + ATP = L-glutamyl-tRNA(Glu) + AMP + diphosphate. Its function is as follows. Catalyzes the attachment of glutamate to tRNA(Glu) in a two-step reaction: glutamate is first activated by ATP to form Glu-AMP and then transferred to the acceptor end of tRNA(Glu). This is Glutamate--tRNA ligase from Lactobacillus johnsonii (strain CNCM I-12250 / La1 / NCC 533).